A 94-amino-acid chain; its full sequence is MVLKTVGVAGTLESSDAMITVEPANQGGIVIDISSSVKRQFGRQIEETVLNTIKELGVENANVKVVDKGALNYALIARTKAAVYRAAESNDYKF.

Ser14 carries the O-(phosphoribosyl dephospho-coenzyme A)serine modification.

Belongs to the CitD family. As to quaternary structure, oligomer with a subunit composition of (alpha,beta,gamma)6.

It localises to the cytoplasm. Functionally, covalent carrier of the coenzyme of citrate lyase. In Fusobacterium nucleatum subsp. nucleatum (strain ATCC 25586 / DSM 15643 / BCRC 10681 / CIP 101130 / JCM 8532 / KCTC 2640 / LMG 13131 / VPI 4355), this protein is Citrate lyase acyl carrier protein.